The primary structure comprises 607 residues: Acyl-coenzyme A thioesterase 11 (607 aa).

The N-terminal 13 residues, 1-13, are a transit peptide targeting the mitochondrion; it reads MIQNVGNHLRRGL. A phosphoserine mark is found at Ser15 and Ser25. Residues 43–155 enclose the HotDog ACOT-type 1 domain; it reads NPTEVQMSQL…LATFVARREI (113 aa). Residues 91–93, 120–122, Arg181, and 271–273 each bind CoA; these read TAS, NSS, and HFR. One can recognise a HotDog ACOT-type 2 domain in the interval 216 to 329; sequence EKTRVESVEL…FMTFVVLDAD (114 aa). Positions 375-585 constitute an START domain; the sequence is LSVPWDPSNQ…GWNGKLAGGH (211 aa).

In terms of tissue distribution, isoform 1 is predominantly expressed in skeletal muscle, liver, testis, stomach, spleen, lung and brain. Isoform 2 is predominantly expressed in kidney, uterus, hibernoma and white adipose tissue.

It localises to the mitochondrion matrix. The protein resides in the cytoplasm. The enzyme catalyses hexadecanoyl-CoA + H2O = hexadecanoate + CoA + H(+). The catalysed reaction is tetradecanoyl-CoA + H2O = tetradecanoate + CoA + H(+). It carries out the reaction dodecanoyl-CoA + H2O = dodecanoate + CoA + H(+). It catalyses the reaction butanoyl-CoA + H2O = butanoate + CoA + H(+). It functions in the pathway lipid metabolism; fatty acid metabolism. Has an acyl-CoA thioesterase activity with a preference for the long chain fatty acyl-CoA thioesters hexadecanoyl-CoA/palmitoyl-CoA and tetradecanoyl-CoA/myristoyl-CoA which are the main substrates in the mitochondrial beta-oxidation pathway. This chain is Acyl-coenzyme A thioesterase 11 (ACOT11), found in Homo sapiens (Human).